Consider the following 460-residue polypeptide: Serine--tRNA ligase (460 aa).

242 to 244 (TAE) is an L-serine binding site. Residues 273–275 (RRE) and V289 each bind ATP. E296 is an L-serine binding site. 369 to 372 (EVSS) is a binding site for ATP. An L-serine-binding site is contributed by S405.

It belongs to the class-II aminoacyl-tRNA synthetase family. Type-1 seryl-tRNA synthetase subfamily. Homodimer. The tRNA molecule binds across the dimer.

It is found in the cytoplasm. The enzyme catalyses tRNA(Ser) + L-serine + ATP = L-seryl-tRNA(Ser) + AMP + diphosphate + H(+). It carries out the reaction tRNA(Sec) + L-serine + ATP = L-seryl-tRNA(Sec) + AMP + diphosphate + H(+). The protein operates within aminoacyl-tRNA biosynthesis; selenocysteinyl-tRNA(Sec) biosynthesis; L-seryl-tRNA(Sec) from L-serine and tRNA(Sec): step 1/1. Catalyzes the attachment of serine to tRNA(Ser). Is also able to aminoacylate tRNA(Sec) with serine, to form the misacylated tRNA L-seryl-tRNA(Sec), which will be further converted into selenocysteinyl-tRNA(Sec). The polypeptide is Serine--tRNA ligase (Haloquadratum walsbyi (strain DSM 16790 / HBSQ001)).